The following is an 80-amino-acid chain: Exodeoxyribonuclease 7 small subunit (80 aa).

Belongs to the XseB family. In terms of assembly, heterooligomer composed of large and small subunits.

The protein localises to the cytoplasm. It carries out the reaction Exonucleolytic cleavage in either 5'- to 3'- or 3'- to 5'-direction to yield nucleoside 5'-phosphates.. Functionally, bidirectionally degrades single-stranded DNA into large acid-insoluble oligonucleotides, which are then degraded further into small acid-soluble oligonucleotides. The protein is Exodeoxyribonuclease 7 small subunit of Klebsiella pneumoniae (strain 342).